The chain runs to 442 residues: Glycolipid 2-alpha-mannosyltransferase (442 aa).

Topologically, residues 1–11 are cytoplasmic; that stretch reads MALFLSKRLLR. A helical; Signal-anchor for type II membrane protein transmembrane segment spans residues 12 to 30; the sequence is FTVIAGAVIVLLLTLNSNS. A stem region region spans residues 31–118; that stretch reads RTQQYIPSSI…YITPSFANKA (88 aa). The Lumenal segment spans residues 31 to 442; sequence RTQQYIPSSI…KPKNWKKFRE (412 aa). Residues 68-95 are disordered; sequence EQSALNSEASEDSEAMDEESKALKAAAE. Over residues 85 to 95 the composition is skewed to basic and acidic residues; that stretch reads EESKALKAAAE. Positions 119-442 are catalytic; the sequence is GKPKACYVTL…KPKNWKKFRE (324 aa). Asparagine 197 carries N-linked (GlcNAc...) asparagine glycosylation. Glutamate 329 serves as the catalytic Nucleophile.

This sequence belongs to the glycosyltransferase 15 family. Requires Mn(2+) as cofactor.

It is found in the golgi apparatus membrane. Its pathway is protein modification; protein glycosylation. Its function is as follows. Mannosyltransferase that transfers an alpha-D-mannosyl residue from GDP-mannose into lipid-linked oligosaccharide, forming an alpha-(1-&gt;2)-D-mannosyl-D-mannose linkage. Required for the attachment of the third mannose residue of O-linked saccharides. This is Glycolipid 2-alpha-mannosyltransferase (KRE2) from Saccharomyces cerevisiae (strain ATCC 204508 / S288c) (Baker's yeast).